We begin with the raw amino-acid sequence, 1009 residues long: MAQLFTKIIVYFLLFASPLLANQWPLHNNSLNDVVQWDHYSFEINGQRLFVFAGEWHYWRIPVPELWIDILEKIKAAGFTAFGIYVNWAYHAPNNYTVDFATGAHDITPILKMAKDVGLYVLLRPGPYINAEVNAGGFPLWVTTGEYGSLRNDDSRYTAAWEPYFTKISEIASEYQITKGGNVVTYQIENEFGDQWTGSPSRRVQYEPAAKYMELLEANARRNGIDIPLVANEPNMRAISWGKDWSNSSANVDVVGLDSYPSCWTCDLSVCTGTTGEYIAYQVIDYYGYFQETQPTMPSFFAEFQGGSYNPWGGPVGGCPEDIGPDFANLFYRWNIGQRVTAINLYMLYGGTNWGAIAAPVVASSYDYSSPISENRTIGAKYYETKLLTMFTRAARDLIVTDLIGNGTQYSTNPAIQTHVIRNPITNGTFYVTLHTISSSSTDETFQLHVNTSAGAFSIPRYGNSIRLNGHQSKIIVTDFQFGTHKLLYSTAEVLTYTVLDGIPTLALWVPTGESGEFSVLGGKWASVLRCEWCSDIQFHPEQDQTSNPTVSRLTVSFTQGQGMSVIKLDTGLRVVLLDRESAYYFWAPALNSDPSVPEDQSVLVQGPHLVRSAKIVGSTIRLTGDSAQTSPIEVFAPKQVRIIFWNDKELKTSKTSYDSLQASLPQPAYVKLPLLGPWKYNGSLPEKAQDYKDTSAAWISADHMKTSNPSPPATFPVLYADEYGFHNSIRIWRGYFTGNATGVVLKVQGGYAFGFSGWLNGKLLGSYLGNASVEHSHLTLPFNVSHVSTSSDNVLVIVHDDTGHDETTGALNPRGILEATLLSDNSSSKFSHWRVAGTAGGETNIDPMRGPYNEGGLYAERMGWHLPGFNDNAWSDAGSKLNFTGADIKFYRTTVPLNIPKGVDVSISFELSACGTTNAFRSQLFVNGYQMGRFNPWVGNQIEFPVPPGILDYTGDNTIGLSLWAQTEDGACAIVDWKINYVLGSSLDVTFNGEYLRPGWTSERLQYS.

The signal sequence occupies residues 1–21 (MAQLFTKIIVYFLLFASPLLA). N-linked (GlcNAc...) asparagine glycosylation occurs at Asn28. Tyr85 contacts substrate. Asn95 is a glycosylation site (N-linked (GlcNAc...) asparagine). 4 residues coordinate substrate: Asn130, Ala131, Glu132, and Asn190. The active-site Proton donor is Glu191. Asn247 carries an N-linked (GlcNAc...) asparagine glycan. Tyr260 contributes to the substrate binding site. The cysteines at positions 266 and 319 are disulfide-linked. Glu303 serves as the catalytic Nucleophile. Residue Tyr368 coordinates substrate. Residues Asn375, Asn406, Asn427, Asn451, Asn682, Asn740, Asn771, Asn784, Asn826, and Asn883 are each glycosylated (N-linked (GlcNAc...) asparagine).

It belongs to the glycosyl hydrolase 35 family.

Its subcellular location is the secreted. The catalysed reaction is Hydrolysis of terminal non-reducing beta-D-galactose residues in beta-D-galactosides.. In terms of biological role, cleaves beta-linked terminal galactosyl residues from gangliosides, glycoproteins, and glycosaminoglycans. The sequence is that of Probable beta-galactosidase B (lacB) from Talaromyces marneffei (strain ATCC 18224 / CBS 334.59 / QM 7333) (Penicillium marneffei).